The chain runs to 150 residues: L-alanine exporter AlaE (150 aa).

Transmembrane regions (helical) follow at residues 17–37 (FAMV…ISGM), 48–68 (LSIP…DFML), 86–106 (LVAY…VVGA), and 111–131 (IITA…FYGY).

This sequence belongs to the AlaE exporter family.

It localises to the cell inner membrane. Functionally, exports L-alanine. The polypeptide is L-alanine exporter AlaE (Aliivibrio fischeri (strain ATCC 700601 / ES114) (Vibrio fischeri)).